Here is a 314-residue protein sequence, read N- to C-terminus: 2,3-dihydroxyphenylpropionate/2,3-dihydroxicinnamic acid 1,2-dioxygenase (314 aa).

Catalysis depends on histidine 115, which acts as the Proton donor. The Proton acceptor role is filled by histidine 179.

Belongs to the LigB/MhpB extradiol dioxygenase family. Homotetramer. It depends on Fe(2+) as a cofactor.

It carries out the reaction 3-(2,3-dihydroxyphenyl)propanoate + O2 = (2Z,4E)-2-hydroxy-6-oxonona-2,4-dienedioate + H(+). The catalysed reaction is (2E)-3-(2,3-dihydroxyphenyl)prop-2-enoate + O2 = (2Z,4E,7E)-2-hydroxy-6-oxonona-2,4,7-trienedioate + H(+). The protein operates within aromatic compound metabolism; 3-phenylpropanoate degradation. Its function is as follows. Catalyzes the non-heme iron(II)-dependent oxidative cleavage of 2,3-dihydroxyphenylpropionic acid and 2,3-dihydroxicinnamic acid into 2-hydroxy-6-ketononadienedioate and 2-hydroxy-6-ketononatrienedioate, respectively. The sequence is that of 2,3-dihydroxyphenylpropionate/2,3-dihydroxicinnamic acid 1,2-dioxygenase from Escherichia coli O139:H28 (strain E24377A / ETEC).